The chain runs to 647 residues: DNA mismatch repair protein MutL (647 aa).

It belongs to the DNA mismatch repair MutL/HexB family.

Its function is as follows. This protein is involved in the repair of mismatches in DNA. It is required for dam-dependent methyl-directed DNA mismatch repair. May act as a 'molecular matchmaker', a protein that promotes the formation of a stable complex between two or more DNA-binding proteins in an ATP-dependent manner without itself being part of a final effector complex. The chain is DNA mismatch repair protein MutL from Bacillus thuringiensis (strain Al Hakam).